We begin with the raw amino-acid sequence, 233 residues long: Eukaryotic translation initiation factor 4E-1 (233 aa).

A disordered region spans residues 1 to 51 (MVVEDALKTSASEDQAKTETNPKPREEDDEPEEGEIVGDEESASKPSKGIA). Positions 14–26 (DQAKTETNPKPRE) are enriched in basic and acidic residues. Over residues 27-41 (EDDEPEEGEIVGDEE) the composition is skewed to acidic residues. 2 EIF4G-binding regions span residues 55–58 (HALE) and 65–104 (FDSPAAKSAKTKQEDWGSSIRPIYTFSTVEEFWSIYNNIR). MRNA is bound by residues 76–81 (KQEDWG), Lys108, and 126–127 (WE). A disulfide bridge connects residues Cys131 and Cys169. Positions 152 to 161 (YTLLGMIGEQ) are EIF4G-binding. MRNA contacts are provided by residues 176–181 (RNRQEK) and 221–225 (MRHER).

It belongs to the eukaryotic initiation factor 4E family. In terms of assembly, EIF4F is a multi-subunit complex, the composition of which varies with external and internal environmental conditions. It is composed of at least EIF4A, EIF4E and EIF4G. EIF4E is also known to interact with other partners. In higher plants two isoforms of EIF4F have been identified, named isoform EIF4F and isoform EIF(iso)4F. Isoform EIF4F has subunits p220 and p26, whereas isoform EIF(iso)4F has subunits p82 and p28. As to quaternary structure, (Microbial infection) Does not interact with the VPg of Plum pox virus (PPV) strain D. According to the redox status, the Cys-131-Cys-169 disulfide bridge may have a role in regulating protein function by affecting its ability to bind capped mRNA. As to expression, mostly expressed in leaves, flower buds, leaf buds and anthers, to a lower extent in roots, stems and green immature fruit, and, at low levels, in petals.

It localises to the nucleus. The protein resides in the cytoplasm. Its function is as follows. Component of the protein complex eIF4F, which is involved in the recognition of the mRNA cap, ATP-dependent unwinding of 5'-terminal secondary structure and recruitment of mRNA to the ribosome. Recognizes and binds the 7-methylguanosine-containing mRNA cap during an early step in the initiation of protein synthesis and facilitates ribosome binding by inducing the unwinding of the mRNAs secondary structures. (Microbial infection) Not involved in the plum pox virus (PPV) strain D infection process. This Prunus domestica (Garden plum) protein is Eukaryotic translation initiation factor 4E-1.